Here is a 543-residue protein sequence, read N- to C-terminus: Chaperonin GroEL (543 aa).

Residues 29-32, 86-90, G413, and D504 each bind ATP; these read TVGP and DGTTT.

It belongs to the chaperonin (HSP60) family. As to quaternary structure, forms a cylinder of 14 subunits composed of two heptameric rings stacked back-to-back. Interacts with the co-chaperonin GroES.

It is found in the cytoplasm. The enzyme catalyses ATP + H2O + a folded polypeptide = ADP + phosphate + an unfolded polypeptide.. In terms of biological role, together with its co-chaperonin GroES, plays an essential role in assisting protein folding. The GroEL-GroES system forms a nano-cage that allows encapsulation of the non-native substrate proteins and provides a physical environment optimized to promote and accelerate protein folding. The protein is Chaperonin GroEL of Mycoplasma genitalium (strain ATCC 33530 / DSM 19775 / NCTC 10195 / G37) (Mycoplasmoides genitalium).